A 201-amino-acid chain; its full sequence is Lymphocyte antigen 6 complex locus protein G5b (201 aa).

An N-terminal signal peptide occupies residues 1–18 (MKVHMLVGVLVMVGFTVG). A UPAR/Ly6 domain is found at 26 to 118 (RTCHFCLVED…SPQLQSSLPE (93 aa)). 5 disulfide bridges follow: Cys28–Cys55, Cys31–Cys40, Cys47–Cys73, Cys81–Cys98, and Cys99–Cys104. Residues Asn141 and Asn183 are each glycosylated (N-linked (GlcNAc...) asparagine).

As to quaternary structure, forms oligomer. Post-translationally, N-glycosylated.

It localises to the secreted. The protein is Lymphocyte antigen 6 complex locus protein G5b (LY6G5B) of Homo sapiens (Human).